Here is a 236-residue protein sequence, read N- to C-terminus: uncharacterized protein (236 aa).

The interval 1 to 73 is disordered; that stretch reads MEPGGSENAA…GGGWGWGNTQ (73 aa).

This is an uncharacterized protein from Homo sapiens (Human).